Reading from the N-terminus, the 749-residue chain is Formate acetyltransferase (749 aa).

The 617-residue stretch at 3–619 folds into the PFL domain; that stretch reads ETNKNHATAW…KTGNTPDGRK (617 aa). Cys-413 functions as the S-acetylcysteine intermediate in the catalytic mechanism. Residue Cys-414 is the Cysteine radical intermediate of the active site. Positions 626–749 constitute a Glycine radical domain; that stretch reads PGANPMHGRD…VISRTFHESM (124 aa). A Glycine radical modification is found at Gly-724.

The protein belongs to the glycyl radical enzyme (GRE) family. PFL subfamily. Homodimer.

Its subcellular location is the cytoplasm. The catalysed reaction is formate + acetyl-CoA = pyruvate + CoA. Its pathway is fermentation; pyruvate fermentation; formate from pyruvate: step 1/1. Functionally, catalyzes the conversion of pyruvate to formate and acetyl-CoA. This is Formate acetyltransferase (pflB) from Staphylococcus aureus (strain USA300).